The sequence spans 381 residues: MSLNMFWFLPTHGDGHYLGTEEGSRPVDHGYLQQIAQAADRLGYTGVLIPTGRSCEDAWLVAASMIPVTQRLKFLVALRPSVTSPTVAARQAATLDRLSNGRALFNLVTGSDPQELAGDGVFLDHSERYEASAEFTQVWRRLLLGETVNFNGKHIHVRGAKLLFPPIQQPYPPLYFGGSSDVAQELAAEQVDLYLTWGEPPELVKEKIEHVRAKAAAHGRKIRFGIRLHVIVRETNDEAWQAAERLISHLDDETIAKAQAAFARTDSVGQQRMAALHNGKRDNLEISPNLWAGVGLVRGGAGTALVGDGPTVAARINEYAALGIDSFVLSGYPHLEEAYRVGELLFPHLDVAIPEIPQPQPLNPQGEAVANDFIPRKVAQS.

This sequence belongs to the SsuD family. As to quaternary structure, homotetramer.

The catalysed reaction is an alkanesulfonate + FMNH2 + O2 = an aldehyde + FMN + sulfite + H2O + 2 H(+). In terms of biological role, catalyzes the desulfonation of aliphatic sulfonates. The chain is Alkanesulfonate monooxygenase from Escherichia coli O127:H6 (strain E2348/69 / EPEC).